The sequence spans 620 residues: Glutathione-regulated potassium-efflux system protein KefC (620 aa).

The next 12 helical transmembrane spans lie at 4–24 (HTLL…PIAV), 26–46 (LGLG…PWGL), 54–74 (SILH…GLEL), 90–110 (GALQ…FLGL), 114–134 (VAEL…MQAM), 149–169 (FAVL…IPLL), 178–198 (LGAF…VVLL), 218–238 (VFSA…EEVG), 270–290 (GLLL…GTLV), 294–314 (LRIL…LWLV), 327–347 (WFAV…GAAQ), and 359–379 (ALTL…VLLT). The RCK N-terminal domain occupies 399-518 (QPRVIVAGFG…AGVAMPERET (120 aa)). The disordered stretch occupies residues 599 to 620 (QGTAEGKHSGEAADEPEVKPSI).

This sequence belongs to the monovalent cation:proton antiporter 2 (CPA2) transporter (TC 2.A.37) family. KefC subfamily. In terms of assembly, homodimer. Interacts with the regulatory subunit KefF.

It localises to the cell inner membrane. Its function is as follows. Pore-forming subunit of a potassium efflux system that confers protection against electrophiles. Catalyzes K(+)/H(+) antiport. This chain is Glutathione-regulated potassium-efflux system protein KefC, found in Salmonella schwarzengrund (strain CVM19633).